Consider the following 363-residue polypeptide: Cytoplasmic envelopment protein 2 (363 aa).

It belongs to the herpesviridae cytoplasmic envelopment protein 2 family. As to quaternary structure, interacts with cytoplasmic envelopment protein 3 and with the capsid.

The protein localises to the virion tegument. It is found in the host cytoplasm. Its subcellular location is the host nucleus. Its function is as follows. Plays a critical role in cytoplasmic virus egress. Participates in the final step of tegumentation and envelope acquisition within the host cytoplasm by directly interacting with the capsid. Upon virion binding to target cell, a signaling cascade is triggered to disrupt the interaction with the capsid, thereby preparing capsid uncoating. The sequence is that of Cytoplasmic envelopment protein 2 (44) from Varicella-zoster virus (strain Dumas) (HHV-3).